Reading from the N-terminus, the 119-residue chain is Large ribosomal subunit protein bL20 (119 aa).

Belongs to the bacterial ribosomal protein bL20 family.

Binds directly to 23S ribosomal RNA and is necessary for the in vitro assembly process of the 50S ribosomal subunit. It is not involved in the protein synthesizing functions of that subunit. This is Large ribosomal subunit protein bL20 from Saccharophagus degradans (strain 2-40 / ATCC 43961 / DSM 17024).